Here is a 276-residue protein sequence, read N- to C-terminus: MRRLKSDWKLSTETREPGARPALLQARMILRLIALALVTGHVGGETRIIKGYECRPHSQPWQVALFQKTRLLCGATLIAPKWLLTAAHCRKPHYVILLGEHNLEKTDGCEQRRMATESFPHPDFNNSLPNKDHRNDIMLVKMSSPVFFTRAVQPLTLSPHCVAAGTSCLISGWGTTSSPQLRLPHSLRCANVSIIEHKECEKAYPGNITDTMLCASVRKEGKDSCQGDSGGPLVCNGSLQGIISWGQDPCAVTRKPGVYTKVCKYFNWIHEVMRNN.

The signal sequence occupies residues Met1–Gly44. Positions Glu45–Arg47 are cleaved as a propeptide — activation peptide. A Peptidase S1 domain is found at Ile48–Arg274. Disulfide bonds link Cys54/Cys189, Cys73/Cys89, Cys168/Cys235, Cys200/Cys214, and Cys225/Cys250. Catalysis depends on His88, which acts as the Charge relay system. N-linked (GlcNAc...) asparagine glycosylation is present at Asn125. Asp136 serves as the catalytic Charge relay system. 2 N-linked (GlcNAc...) asparagine glycosylation sites follow: Asn191 and Asn207. The Charge relay system role is filled by Ser229. An N-linked (GlcNAc...) asparagine glycan is attached at Asn236.

The protein belongs to the peptidase S1 family. Kallikrein subfamily. As to expression, expressed in brain and prostate (isoform 1) and prostate (isoform 2).

It localises to the secreted. Possible multifunctional protease. Efficiently cleaves 'bz-Phe-Arg-4-methylcoumaryl-7-amide', a kallikrein substrate, and weakly cleaves other substrates for kallikrein and trypsin. In Mus musculus (Mouse), this protein is Kallikrein-11 (Klk11).